The chain runs to 138 residues: Large ribosomal subunit protein uL16 (138 aa).

The protein belongs to the universal ribosomal protein uL16 family. In terms of assembly, part of the 50S ribosomal subunit.

Its function is as follows. Binds 23S rRNA and is also seen to make contacts with the A and possibly P site tRNAs. The polypeptide is Large ribosomal subunit protein uL16 (Mycoplasmoides gallisepticum (strain R(low / passage 15 / clone 2)) (Mycoplasma gallisepticum)).